Here is a 208-residue protein sequence, read N- to C-terminus: Cysteine-rich protein 2 (208 aa).

In terms of domain architecture, LIM zinc-binding 1 spans 5 to 57 (CPKCDKTVYFAEKVSSLGKDWHRFCLRCEHCSKTLTPGGHAEHDGKPFCHKPC). Position 23 is an N6-acetyllysine (K23). A disordered region spans residues 98 to 117 (TEERKASGPPKGPSKASSVT). S104 carries the phosphoserine modification. Residues 104–115 (SGPPKGPSKASS) show a composition bias toward low complexity. One can recognise an LIM zinc-binding 2 domain in the interval 126–178 (CPRCNKRVYFAEKVTSLGKDWHRPCLRCERCGKTLTPGGHAEHDGQPYCHKPC). An N6-acetyllysine mark is found at K138 and K144.

Interacts with TGFB1I1.

The sequence is that of Cysteine-rich protein 2 (CRIP2) from Bos taurus (Bovine).